A 542-amino-acid polypeptide reads, in one-letter code: uncharacterized protein (542 aa).

A compositionally biased stretch (low complexity) spans 125-138 (ANSNSSSTGRDSTP). Disordered stretches follow at residues 125–182 (ANSN…NHHN), 194–333 (LPPT…CSSS), 390–428 (SSST…YSSI), and 459–487 (SSSS…PSCN). Residues 202-213 (QKPSFLSNSNQI) are compositionally biased toward polar residues. Composition is skewed to low complexity over residues 228–306 (SYTS…NSNN), 314–333 (NKLS…CSSS), 390–423 (SSST…TSTN), and 459–479 (SSSS…GGNS).

This is an uncharacterized protein from Dictyostelium discoideum (Social amoeba).